A 443-amino-acid polypeptide reads, in one-letter code: UDP-N-acetylmuramate--L-alanine ligase (443 aa).

Residue 111 to 117 (GAHGKTS) coordinates ATP.

This sequence belongs to the MurCDEF family.

The protein localises to the cytoplasm. It catalyses the reaction UDP-N-acetyl-alpha-D-muramate + L-alanine + ATP = UDP-N-acetyl-alpha-D-muramoyl-L-alanine + ADP + phosphate + H(+). Its pathway is cell wall biogenesis; peptidoglycan biosynthesis. Functionally, cell wall formation. The sequence is that of UDP-N-acetylmuramate--L-alanine ligase from Levilactobacillus brevis (strain ATCC 367 / BCRC 12310 / CIP 105137 / JCM 1170 / LMG 11437 / NCIMB 947 / NCTC 947) (Lactobacillus brevis).